We begin with the raw amino-acid sequence, 317 residues long: Bile salt hydrolase/transferase (317 aa).

Residue Cys2 is the Nucleophile; acyl-thioester intermediate of the active site. Deoxycholate is bound by residues Cys2 and Arg18. Position 82 (Asn82) interacts with taurine.

The protein belongs to the peptidase C59 family. As to quaternary structure, homotetramer. The tetramer consists of a dimer of dimers.

The catalysed reaction is glycocholate + H2O = cholate + glycine. It catalyses the reaction glycodeoxycholate + H2O = deoxycholate + glycine. The enzyme catalyses chenodeoxycholate + glycine = glycochenodeoxycholate + H2O. It carries out the reaction cholate + taurine = taurocholate + H2O. The catalysed reaction is taurodeoxycholate + H2O = deoxycholate + taurine. It catalyses the reaction taurochenodeoxycholate + H2O = chenodeoxycholate + taurine. The enzyme catalyses an L-alpha-amino acid + cholate = an N-choloyl-L-alpha-amino acid + H2O. It carries out the reaction an L-alpha-amino acid + taurocholate = an N-choloyl-L-alpha-amino acid + taurine. The catalysed reaction is cholate + L-alanine = L-alanocholate + H2O. It catalyses the reaction taurocholate + L-alanine = L-alanocholate + taurine. The enzyme catalyses cholate + L-serine = L-serocholate + H2O. It carries out the reaction taurocholate + L-serine = L-serocholate + taurine. The catalysed reaction is cholate + L-histidine = L-histidocholate + H2O. It catalyses the reaction taurocholate + L-histidine = L-histidocholate + taurine. Its pathway is lipid metabolism; bile acid biosynthesis. Hydrolase activity is competitively inhibited by the products cholate (CA) and deoxycholate (DCA), and by phenylacetate and 4-aminophenylacetate. Penicillin V and penicillin G show mixed inhibition. Strongly inhibited by thiol enzyme inhibitors in vitro. In terms of biological role, possesses dual functions in bile acid metabolism. Acts as a bile salt hydrolase that catalyzes the deconjugation of glycine- and taurine-linked bile salts, which occurs naturally in the intestines of humans, releasing amino acid residues and deconjugated bile salts (bile acids). Can hydrolyze the amide bond in all six major human conjugated bile salts, namely glycocholate (GCA), glycodeoxycholate (GDCA), glycochenodeoxycholate (GCDCA), taurocholate (TCA), taurodeoxycholate (TDCA) and taurochenodeoxycholate (TCDCA). Shows a slight preference for glycine-conjugated bile acids as substrates. Also acts as an amine N-acyltransferase that conjugates a wide variety of amino acids to conjugated and non-conjugated bile acids, thus producing bacterial bile acid amidates (BBAAs) - also named microbially conjugated bile acids (MCBAs) - in the gastrointestinal tract. These BBAAs may facilitate communication between the microbiota and host through the activation of human ligand-activated transcription factors. Is totally inactive toward penicillin V. The chain is Bile salt hydrolase/transferase from Bifidobacterium longum.